The following is a 152-amino-acid chain: Small ribosomal subunit protein uS13 (152 aa).

It belongs to the universal ribosomal protein uS13 family. Part of the 30S ribosomal subunit. Forms a loose heterodimer with protein S19. Forms two bridges to the 50S subunit in the 70S ribosome.

Its function is as follows. Located at the top of the head of the 30S subunit, it contacts several helices of the 16S rRNA. In the 70S ribosome it contacts the 23S rRNA (bridge B1a) and protein L5 of the 50S subunit (bridge B1b), connecting the 2 subunits; these bridges are implicated in subunit movement. This is Small ribosomal subunit protein uS13 from Pyrobaculum arsenaticum (strain DSM 13514 / JCM 11321 / PZ6).